A 299-amino-acid chain; its full sequence is Protoheme IX farnesyltransferase 1 (299 aa).

9 helical membrane-spanning segments follow: residues 25-45 (VVVL…RAGV), 47-67 (WSVL…AAVV), 95-115 (LPAL…LLAF), 119-139 (LTAW…TGFL), 147-167 (IVIG…AVSG), 173-193 (PLLL…ALAI), 217-237 (ALHI…PYAI), 243-263 (LYLA…WVLY), and 279-299 (IGYL…LLNL).

It belongs to the UbiA prenyltransferase family. Protoheme IX farnesyltransferase subfamily.

It localises to the cell inner membrane. The enzyme catalyses heme b + (2E,6E)-farnesyl diphosphate + H2O = Fe(II)-heme o + diphosphate. The protein operates within porphyrin-containing compound metabolism; heme O biosynthesis; heme O from protoheme: step 1/1. Its function is as follows. Converts heme B (protoheme IX) to heme O by substitution of the vinyl group on carbon 2 of heme B porphyrin ring with a hydroxyethyl farnesyl side group. In Pseudomonas entomophila (strain L48), this protein is Protoheme IX farnesyltransferase 1.